Here is a 326-residue protein sequence, read N- to C-terminus: D-allose transport system permease protein AlsC (326 aa).

Residues 1–18 (MGFTTRVKSEASEKKPFN) lie on the Cytoplasmic side of the membrane. Residues 19 to 39 (FALFWDKYGTFFILAIIVAIF) form a helical membrane-spanning segment. At 40-70 (GSLSPEYFLTTNNITQIFVQSSVTVLIGMGE) the chain is on the periplasmic side. Residues 71-91 (FFAILVAGIDLSVGAILALSG) form a helical membrane-spanning segment. The Cytoplasmic portion of the chain corresponds to 92 to 101 (MVTAKLMLAG). A helical transmembrane segment spans residues 102-122 (VDPFLAAMIGGVLVGGALGAI). Residues 123–124 (NG) are Periplasmic-facing. The chain crosses the membrane as a helical span at residues 125–145 (CLVNWTGLHPFIITLGTNAIF). Over 146–149 (RGIT) the chain is Cytoplasmic. Residues 150–170 (LVISDANSVYGFSFDFVNFFA) form a helical membrane-spanning segment. The Periplasmic portion of the chain corresponds to 171–172 (AS). Residues 173–193 (VIGIPVPVIFSLIVALILWFL) form a helical membrane-spanning segment. The Cytoplasmic portion of the chain corresponds to 194–221 (TTRMRLGRNIYALGGNKNSAFYSGIDVK). Residues 222–242 (FHILVVFIISGVCAGLAGVVS) form a helical membrane-spanning segment. Residues 243-252 (TARLGAAEPL) lie on the Periplasmic side of the membrane. Residues 253 to 273 (AGMGFETYAIASAIIGGTSFF) form a helical membrane-spanning segment. Over 274–278 (GGKGR) the chain is Cytoplasmic. 2 helical membrane passes run 279–299 (IFSV…LNIL) and 300–320 (QVQT…AVAL). Over 321–326 (DRLISK) the chain is Cytoplasmic.

It belongs to the binding-protein-dependent transport system permease family. AraH/RbsC subfamily.

The protein localises to the cell inner membrane. Part of the binding-protein-dependent transport system AlsBAC for D-allose; probably responsible for the translocation of the substrate across the membrane. The protein is D-allose transport system permease protein AlsC (alsC) of Escherichia coli (strain K12).